Here is a 275-residue protein sequence, read N- to C-terminus: Bis(5'-nucleosyl)-tetraphosphatase, symmetrical (275 aa).

This sequence belongs to the Ap4A hydrolase family.

The enzyme catalyses P(1),P(4)-bis(5'-adenosyl) tetraphosphate + H2O = 2 ADP + 2 H(+). Its function is as follows. Hydrolyzes diadenosine 5',5'''-P1,P4-tetraphosphate to yield ADP. This Nitrosospira multiformis (strain ATCC 25196 / NCIMB 11849 / C 71) protein is Bis(5'-nucleosyl)-tetraphosphatase, symmetrical.